The primary structure comprises 206 residues: Small ribosomal subunit protein uS4 (206 aa).

The S4 RNA-binding domain maps to 96-156; the sequence is CRLDNVVYRM…EKSKNQLRIA (61 aa).

It belongs to the universal ribosomal protein uS4 family. In terms of assembly, part of the 30S ribosomal subunit. Contacts protein S5. The interaction surface between S4 and S5 is involved in control of translational fidelity.

Functionally, one of the primary rRNA binding proteins, it binds directly to 16S rRNA where it nucleates assembly of the body of the 30S subunit. In terms of biological role, with S5 and S12 plays an important role in translational accuracy. This chain is Small ribosomal subunit protein uS4, found in Ectopseudomonas mendocina (strain ymp) (Pseudomonas mendocina).